The chain runs to 100 residues: Protamine-2 (100 aa).

Residues 1–45 (MVRYHVRSPSERPHREYRQLVNGQEQGRHGQEEQGMSAEGVEGYG) form a disordered region. Residues Ser8, Ser10, and Ser37 each carry the phosphoserine modification. Residues 8 to 18 (SPSERPHREYR) are compositionally biased toward basic and acidic residues.

This sequence belongs to the protamine P2 family. Interacts with TDRP. Post-translationally, proteolytic processing into mature chains is required for histone eviction during spermatogenesis. Transition proteins (TNP1 and TNP2) are required for processing. In terms of tissue distribution, testis.

Its subcellular location is the nucleus. The protein resides in the chromosome. Functionally, protamines substitute for histones in the chromatin of sperm during the haploid phase of spermatogenesis. They compact sperm DNA into a highly condensed, stable and inactive complex. In Alouatta seniculus (Red howler monkey), this protein is Protamine-2 (PRM2).